The following is a 247-amino-acid chain: DNA polymerase sliding clamp 1 (247 aa).

Belongs to the PCNA family. As to quaternary structure, heterotrimer. The subunits circularize to form a toroid; DNA passes through its center. Replication factor C (RFC) is required to load the toroid on the DNA.

Functionally, sliding clamp subunit that acts as a moving platform for DNA processing. Responsible for tethering the catalytic subunit of DNA polymerase and other proteins to DNA during high-speed replication. The sequence is that of DNA polymerase sliding clamp 1 from Aeropyrum pernix (strain ATCC 700893 / DSM 11879 / JCM 9820 / NBRC 100138 / K1).